The following is a 168-amino-acid chain: Photosystem I assembly protein Ycf3 (168 aa).

TPR repeat units lie at residues 35-68 (AFTY…EIDP), 72-105 (SYIL…NPSL), and 120-153 (GEQA…APSN).

The protein belongs to the Ycf3 family.

It localises to the plastid. The protein localises to the chloroplast thylakoid membrane. Essential for the assembly of the photosystem I (PSI) complex. May act as a chaperone-like factor to guide the assembly of the PSI subunits. This is Photosystem I assembly protein Ycf3 from Physcomitrium patens (Spreading-leaved earth moss).